The chain runs to 178 residues: NADH-quinone oxidoreductase subunit I 2 (178 aa).

2 4Fe-4S ferredoxin-type domains span residues 46 to 78 and 88 to 117; these read IVLTRDPDGGERCVACYLCSAVCPVSCISMQAA and AWFRINFARCIYCGLCEEACPTSAIQLTPF. The [4Fe-4S] cluster site is built by cysteine 58, cysteine 61, cysteine 64, cysteine 68, cysteine 97, cysteine 100, cysteine 103, and cysteine 107.

Belongs to the complex I 23 kDa subunit family. In terms of assembly, NDH-1 is composed of 14 different subunits. Subunits NuoA, H, J, K, L, M, N constitute the membrane sector of the complex. [4Fe-4S] cluster serves as cofactor.

It localises to the cell inner membrane. It carries out the reaction a quinone + NADH + 5 H(+)(in) = a quinol + NAD(+) + 4 H(+)(out). NDH-1 shuttles electrons from NADH, via FMN and iron-sulfur (Fe-S) centers, to quinones in the respiratory chain. The immediate electron acceptor for the enzyme in this species is believed to be ubiquinone. Couples the redox reaction to proton translocation (for every two electrons transferred, four hydrogen ions are translocated across the cytoplasmic membrane), and thus conserves the redox energy in a proton gradient. The chain is NADH-quinone oxidoreductase subunit I 2 from Syntrophobacter fumaroxidans (strain DSM 10017 / MPOB).